Consider the following 288-residue polypeptide: 3-methyl-2-oxobutanoate hydroxymethyltransferase (288 aa).

Mg(2+) is bound by residues Asp-48 and Asp-87. Residues 48 to 49 (DS), Asp-87, and Lys-116 contribute to the 3-methyl-2-oxobutanoate site. Mg(2+) is bound at residue Glu-118. Glu-185 (proton acceptor) is an active-site residue.

The protein belongs to the PanB family. Homodecamer; pentamer of dimers. It depends on Mg(2+) as a cofactor.

The protein localises to the cytoplasm. The enzyme catalyses 3-methyl-2-oxobutanoate + (6R)-5,10-methylene-5,6,7,8-tetrahydrofolate + H2O = 2-dehydropantoate + (6S)-5,6,7,8-tetrahydrofolate. It functions in the pathway cofactor biosynthesis; coenzyme A biosynthesis. Catalyzes the reversible reaction in which hydroxymethyl group from 5,10-methylenetetrahydrofolate is transferred onto alpha-ketoisovalerate to form ketopantoate. The protein is 3-methyl-2-oxobutanoate hydroxymethyltransferase of Hyperthermus butylicus (strain DSM 5456 / JCM 9403 / PLM1-5).